The primary structure comprises 507 residues: Maturase K (507 aa).

This sequence belongs to the intron maturase 2 family. MatK subfamily.

Its subcellular location is the plastid. The protein resides in the chloroplast. Its function is as follows. Usually encoded in the trnK tRNA gene intron. Probably assists in splicing its own and other chloroplast group II introns. The sequence is that of Maturase K from Ranunculus repens (Creeping buttercup).